The chain runs to 795 residues: Phenylalanine--tRNA ligase beta subunit (795 aa).

In terms of domain architecture, tRNA-binding spans 39-148; sequence AGRFTGVVVG…AEAPIGQDIR (110 aa). The B5 domain occupies 401–476; sequence PQPATITLRR…RVYGYDAIPN (76 aa). Mg(2+) is bound by residues D454, D460, E463, and E464. Residues 701–794 enclose the FDX-ACB domain; that stretch reads SRFPANRRDI…LKQRFQASLR (94 aa).

Belongs to the phenylalanyl-tRNA synthetase beta subunit family. Type 1 subfamily. Tetramer of two alpha and two beta subunits. The cofactor is Mg(2+).

Its subcellular location is the cytoplasm. The enzyme catalyses tRNA(Phe) + L-phenylalanine + ATP = L-phenylalanyl-tRNA(Phe) + AMP + diphosphate + H(+). This is Phenylalanine--tRNA ligase beta subunit from Sodalis glossinidius (strain morsitans).